Consider the following 350-residue polypeptide: Phenylalanine--tRNA ligase alpha subunit (350 aa).

Position 271 (Glu-271) interacts with Mg(2+).

Belongs to the class-II aminoacyl-tRNA synthetase family. Phe-tRNA synthetase alpha subunit type 1 subfamily. Tetramer of two alpha and two beta subunits. It depends on Mg(2+) as a cofactor.

It localises to the cytoplasm. The catalysed reaction is tRNA(Phe) + L-phenylalanine + ATP = L-phenylalanyl-tRNA(Phe) + AMP + diphosphate + H(+). The sequence is that of Phenylalanine--tRNA ligase alpha subunit from Delftia acidovorans (strain DSM 14801 / SPH-1).